We begin with the raw amino-acid sequence, 332 residues long: UPF0194 membrane protein YbhG (332 aa).

The first 26 residues, 1–26, serve as a signal peptide directing secretion; it reads MMKKPVVIELAVVVLAAVVAGGYWWY. The stretch at 108 to 209 forms a coiled coil; that stretch reads EEIAQAAAAV…LNLQDSTLIA (102 aa).

This sequence belongs to the UPF0194 family.

Its subcellular location is the periplasm. The chain is UPF0194 membrane protein YbhG (ybhG) from Shigella sonnei (strain Ss046).